The sequence spans 217 residues: Octanoyltransferase (217 aa).

The BPL/LPL catalytic domain occupies 34–216 (SETRDELWLL…AASRASRHDR (183 aa)). Residues 73 to 80 (RGGQVTWH), 140 to 142 (ALG), and 153 to 155 (GLS) each bind substrate. C171 (acyl-thioester intermediate) is an active-site residue.

The protein belongs to the LipB family.

It is found in the cytoplasm. The catalysed reaction is octanoyl-[ACP] + L-lysyl-[protein] = N(6)-octanoyl-L-lysyl-[protein] + holo-[ACP] + H(+). It participates in protein modification; protein lipoylation via endogenous pathway; protein N(6)-(lipoyl)lysine from octanoyl-[acyl-carrier-protein]: step 1/2. Functionally, catalyzes the transfer of endogenously produced octanoic acid from octanoyl-acyl-carrier-protein onto the lipoyl domains of lipoate-dependent enzymes. Lipoyl-ACP can also act as a substrate although octanoyl-ACP is likely to be the physiological substrate. The polypeptide is Octanoyltransferase (Halorhodospira halophila (strain DSM 244 / SL1) (Ectothiorhodospira halophila (strain DSM 244 / SL1))).